A 531-amino-acid polypeptide reads, in one-letter code: Poly(A)-specific ribonuclease PNLDC1 (531 aa).

Mg(2+)-binding residues include Asp-28, Glu-30, Asp-271, and Asp-365. The helical transmembrane segment at 506–526 threads the bilayer; sequence ITCLLQVCSIVTTWAMIAFLL.

Belongs to the CAF1 family. Mg(2+) serves as cofactor. Specifically expressed in embryonic stem cells. Highly expressed in testis.

Its subcellular location is the endoplasmic reticulum membrane. The enzyme catalyses Exonucleolytic cleavage of poly(A) to 5'-AMP.. Its function is as follows. 3'-exoribonuclease that has a preference for poly(A) tails of mRNAs, thereby efficiently degrading poly(A) tails. Exonucleolytic degradation of the poly(A) tail is often the first step in the decay of eukaryotic mRNAs and is also used to silence certain maternal mRNAs translationally during oocyte maturation and early embryonic development. May act as a regulator of multipotency in embryonic stem cells. Is a critical factor for proper spermatogenesis, involved in pre-piRNAs processing to generate mature piRNAs. The chain is Poly(A)-specific ribonuclease PNLDC1 from Mus musculus (Mouse).